Consider the following 399-residue polypeptide: Coiled-coil domain-containing protein 85C-B (399 aa).

Coiled coils occupy residues 52 to 84 and 113 to 144; these read NRSL…ELCC and KEVS…DIIL. A disordered region spans residues 151 to 199; sequence NGAGSRSSIDSQSSLSNLNGGSGTVRDVGDGSSTSSGGSAGSPDHHHNH. Residues 155–169 show a composition bias toward low complexity; the sequence is SRSSIDSQSSLSNLN.

Belongs to the CCDC85 family.

The protein resides in the cell junction. It localises to the tight junction. Its subcellular location is the adherens junction. In terms of biological role, may play a role in cell-cell adhesion and epithelium development through its interaction with proteins of the beta-catenin family. May play an important role in cortical development, especially in the maintenance of radial glia. The protein is Coiled-coil domain-containing protein 85C-B (ccdc85cb) of Danio rerio (Zebrafish).